Reading from the N-terminus, the 234-residue chain is Endonuclease V (234 aa).

Mg(2+) is bound by residues Asp-36 and Asp-104.

This sequence belongs to the endonuclease V family. Mg(2+) serves as cofactor.

The protein localises to the cytoplasm. It carries out the reaction Endonucleolytic cleavage at apurinic or apyrimidinic sites to products with a 5'-phosphate.. In terms of biological role, DNA repair enzyme involved in the repair of deaminated bases. Selectively cleaves double-stranded DNA at the second phosphodiester bond 3' to a deoxyinosine leaving behind the intact lesion on the nicked DNA. The sequence is that of Endonuclease V from Yersinia pseudotuberculosis serotype O:1b (strain IP 31758).